Consider the following 370-residue polypeptide: Peptidoglycan glycosyltransferase MrdB (370 aa).

The next 9 helical transmembrane spans lie at 20–40 (MLLILLALLVYSALVIWSASG), 50–70 (IGQIAMGLVIMVVMAQIPPRV), 75–95 (APYLYIICIILLVAVDAFGAI), 136–156 (SLKNTGIALVLIFMPTLLVAA), 160–180 (LGTSILVALSGLFVLFLSGLS), 183–203 (LIGVAVVLVAAFIPILWFFLM), 263–283 (FIFAVLAEELGLVGILILLAL), 312–332 (LILFVYVFVNIGMVSGILPVV), and 336–356 (LPLVSYGGSALIVLMAGFGIV).

It belongs to the SEDS family. MrdB/RodA subfamily.

The protein resides in the cell inner membrane. It catalyses the reaction [GlcNAc-(1-&gt;4)-Mur2Ac(oyl-L-Ala-gamma-D-Glu-L-Lys-D-Ala-D-Ala)](n)-di-trans,octa-cis-undecaprenyl diphosphate + beta-D-GlcNAc-(1-&gt;4)-Mur2Ac(oyl-L-Ala-gamma-D-Glu-L-Lys-D-Ala-D-Ala)-di-trans,octa-cis-undecaprenyl diphosphate = [GlcNAc-(1-&gt;4)-Mur2Ac(oyl-L-Ala-gamma-D-Glu-L-Lys-D-Ala-D-Ala)](n+1)-di-trans,octa-cis-undecaprenyl diphosphate + di-trans,octa-cis-undecaprenyl diphosphate + H(+). Its pathway is cell wall biogenesis; peptidoglycan biosynthesis. Its function is as follows. Peptidoglycan polymerase that is essential for cell wall elongation. The chain is Peptidoglycan glycosyltransferase MrdB from Escherichia coli O157:H7.